The chain runs to 455 residues: Bifunctional protein GlmU (455 aa).

The interval 1 to 228 (MTQPLHVIIL…AQEAEGANDP (228 aa)) is pyrophosphorylase. Residues 10–13 (LAAG), Lys-24, Gln-76, 81–82 (GT), 103–105 (YGD), Gly-138, Glu-153, Asn-168, and Asn-226 contribute to the UDP-N-acetyl-alpha-D-glucosamine site. Asp-105 contributes to the Mg(2+) binding site. Mg(2+) is bound at residue Asn-226. The tract at residues 229–249 (WQLSQLERAWQRRAVRALCAQ) is linker. The segment at 250–455 (GARVRDPARL…DGWKRPLKKS (206 aa)) is N-acetyltransferase. UDP-N-acetyl-alpha-D-glucosamine-binding residues include Arg-332 and Lys-350. His-362 functions as the Proton acceptor in the catalytic mechanism. UDP-N-acetyl-alpha-D-glucosamine contacts are provided by Tyr-365 and Asn-376. Acetyl-CoA-binding positions include Ala-379, 385-386 (NY), Ser-404, Ala-422, and Arg-439.

It in the N-terminal section; belongs to the N-acetylglucosamine-1-phosphate uridyltransferase family. The protein in the C-terminal section; belongs to the transferase hexapeptide repeat family. As to quaternary structure, homotrimer. Mg(2+) is required as a cofactor.

The protein resides in the cytoplasm. The catalysed reaction is alpha-D-glucosamine 1-phosphate + acetyl-CoA = N-acetyl-alpha-D-glucosamine 1-phosphate + CoA + H(+). It catalyses the reaction N-acetyl-alpha-D-glucosamine 1-phosphate + UTP + H(+) = UDP-N-acetyl-alpha-D-glucosamine + diphosphate. Its pathway is nucleotide-sugar biosynthesis; UDP-N-acetyl-alpha-D-glucosamine biosynthesis; N-acetyl-alpha-D-glucosamine 1-phosphate from alpha-D-glucosamine 6-phosphate (route II): step 2/2. It participates in nucleotide-sugar biosynthesis; UDP-N-acetyl-alpha-D-glucosamine biosynthesis; UDP-N-acetyl-alpha-D-glucosamine from N-acetyl-alpha-D-glucosamine 1-phosphate: step 1/1. The protein operates within bacterial outer membrane biogenesis; LPS lipid A biosynthesis. Its function is as follows. Catalyzes the last two sequential reactions in the de novo biosynthetic pathway for UDP-N-acetylglucosamine (UDP-GlcNAc). The C-terminal domain catalyzes the transfer of acetyl group from acetyl coenzyme A to glucosamine-1-phosphate (GlcN-1-P) to produce N-acetylglucosamine-1-phosphate (GlcNAc-1-P), which is converted into UDP-GlcNAc by the transfer of uridine 5-monophosphate (from uridine 5-triphosphate), a reaction catalyzed by the N-terminal domain. The chain is Bifunctional protein GlmU from Stenotrophomonas maltophilia (strain R551-3).